The primary structure comprises 305 residues: Heterogeneous nuclear ribonucleoprotein A0 (305 aa).

The residue at position 1 (Met-1) is an N-acetylmethionine. The RRM 1 domain occupies 7-86; the sequence is CKLFIGGLNV…VELKRAVSRE (80 aa). Ser-68 is modified (phosphoserine). Lys-80 is covalently cross-linked (Glycyl lysine isopeptide (Lys-Gly) (interchain with G-Cter in SUMO2)). Phosphoserine; by MAPKAPK2 is present on Ser-84. Residues Lys-96, Lys-98, Lys-99, and Lys-106 each participate in a glycyl lysine isopeptide (Lys-Gly) (interchain with G-Cter in SUMO2) cross-link. Residues 98-175 form the RRM 2 domain; the sequence is KKLFVGGLKG…HRVEVKKAVP (78 aa). Lys-133 carries the N6-acetyllysine modification. Omega-N-methylarginine is present on Arg-139. Glycyl lysine isopeptide (Lys-Gly) (interchain with G-Cter in SUMO2) cross-links involve residues Lys-154, Lys-159, Lys-172, and Lys-176. Disordered stretches follow at residues 174–214 and 262–305; these read VPKE…KGGG and QSSY…GSSF. Composition is skewed to gly residues over residues 181–200 and 269–281; these read SGGGGGGSRSSRGGRGGRGR and KSGGGGGGGGSSW. Ser-188 is modified (phosphoserine). Residue Arg-284 is modified to Omega-N-methylarginine. Positions 290 to 305 are enriched in gly residues; the sequence is YRGGYGGGGGYGGSSF. At Arg-291 the chain carries Asymmetric dimethylarginine; alternate. Position 291 is a dimethylated arginine; alternate (Arg-291). Arg-291 carries the omega-N-methylarginine; alternate modification.

Phosphorylated at Ser-84 by MAPKAPK2 in response to LPS treatment, promoting stabilization of GADD45A mRNA. Post-translationally, arg-291 is dimethylated, probably to asymmetric dimethylarginine.

The protein localises to the nucleus. Functionally, mRNA-binding component of ribonucleosomes. Specifically binds AU-rich element (ARE)-containing mRNAs. Involved in post-transcriptional regulation of cytokines mRNAs. The polypeptide is Heterogeneous nuclear ribonucleoprotein A0 (HNRNPA0) (Homo sapiens (Human)).